We begin with the raw amino-acid sequence, 274 residues long: Thiamine kinase (274 aa).

The protein belongs to the thiamine kinase family.

It carries out the reaction thiamine + ATP = thiamine phosphate + ADP + H(+). It participates in cofactor biosynthesis; thiamine diphosphate biosynthesis; thiamine phosphate from thiamine: step 1/1. Catalyzes the ATP-dependent phosphorylation of thiamine to thiamine phosphate. Is involved in thiamine salvage. The chain is Thiamine kinase from Escherichia coli O157:H7 (strain EC4115 / EHEC).